The sequence spans 910 residues: Eukaryotic translation initiation factor 3 subunit C (910 aa).

Residues Met1 to Gln21 form a disordered region. The span at Ser11–Ile20 shows a compositional bias: acidic residues. A phosphoserine mark is found at Ser34, Ser165, Ser176, and Ser185. The interval Phe157–Asp279 is disordered. The span at Asp162–Asp186 shows a compositional bias: acidic residues. Positions Gly188–Ala207 are enriched in low complexity. The segment covering Ala209–Asn235 has biased composition (acidic residues). Residues Met240–Ile268 show a composition bias toward basic and acidic residues. In terms of domain architecture, PCI spans Phe639 to Pro815. The disordered stretch occupies residues Phe847–Glu910. Residues Asn862 to Gly874 show a composition bias toward low complexity. The segment covering Arg882–Lys891 has biased composition (basic residues). Positions Asp895–Glu910 are enriched in low complexity.

This sequence belongs to the eIF-3 subunit C family. As to quaternary structure, component of the eukaryotic translation initiation factor 3 (eIF-3) complex. The eIF-3 complex interacts with pix.

It is found in the cytoplasm. Component of the eukaryotic translation initiation factor 3 (eIF-3) complex, which is involved in protein synthesis of a specialized repertoire of mRNAs and, together with other initiation factors, stimulates binding of mRNA and methionyl-tRNAi to the 40S ribosome. The eIF-3 complex specifically targets and initiates translation of a subset of mRNAs involved in cell proliferation. The polypeptide is Eukaryotic translation initiation factor 3 subunit C (Drosophila erecta (Fruit fly)).